We begin with the raw amino-acid sequence, 956 residues long: Glycine dehydrogenase (decarboxylating) (956 aa).

Residue Lys-697 is modified to N6-(pyridoxal phosphate)lysine.

The protein belongs to the GcvP family. The glycine cleavage system is composed of four proteins: P, T, L and H. The cofactor is pyridoxal 5'-phosphate.

It carries out the reaction N(6)-[(R)-lipoyl]-L-lysyl-[glycine-cleavage complex H protein] + glycine + H(+) = N(6)-[(R)-S(8)-aminomethyldihydrolipoyl]-L-lysyl-[glycine-cleavage complex H protein] + CO2. In terms of biological role, the glycine cleavage system catalyzes the degradation of glycine. The P protein binds the alpha-amino group of glycine through its pyridoxal phosphate cofactor; CO(2) is released and the remaining methylamine moiety is then transferred to the lipoamide cofactor of the H protein. The sequence is that of Glycine dehydrogenase (decarboxylating) from Cereibacter sphaeroides (strain KD131 / KCTC 12085) (Rhodobacter sphaeroides).